A 54-amino-acid chain; its full sequence is UPF0391 membrane protein R00741 (54 aa).

The next 2 membrane-spanning stretches (helical) occupy residues 5 to 25 (ALVF…GIAG) and 30 to 50 (IAQV…VAGL).

This sequence belongs to the UPF0391 family.

It is found in the cell membrane. This is UPF0391 membrane protein R00741 from Rhizobium meliloti (strain 1021) (Ensifer meliloti).